A 695-amino-acid chain; its full sequence is UvrABC system protein B (695 aa).

Residues 45 to 434 (EGIEDGLSFQ…QVVEQVVRPT (390 aa)) enclose the Helicase ATP-binding domain. Residue 58–65 (GVTGSGKT) participates in ATP binding. The Beta-hairpin motif lies at 111–134 (YYDYYQPEAYVPQRDLFIEKDSSI). The region spanning 449–602 (QVDDLLSEIN…QMAFNEANGI (154 aa)) is the Helicase C-terminal domain. One can recognise a UVR domain in the interval 646-681 (SKEIKRLEKLMMDHAKNLEFEKAAQVRDQLAKLKAQ).

It belongs to the UvrB family. As to quaternary structure, forms a heterotetramer with UvrA during the search for lesions. Interacts with UvrC in an incision complex.

The protein localises to the cytoplasm. In terms of biological role, the UvrABC repair system catalyzes the recognition and processing of DNA lesions. A damage recognition complex composed of 2 UvrA and 2 UvrB subunits scans DNA for abnormalities. Upon binding of the UvrA(2)B(2) complex to a putative damaged site, the DNA wraps around one UvrB monomer. DNA wrap is dependent on ATP binding by UvrB and probably causes local melting of the DNA helix, facilitating insertion of UvrB beta-hairpin between the DNA strands. Then UvrB probes one DNA strand for the presence of a lesion. If a lesion is found the UvrA subunits dissociate and the UvrB-DNA preincision complex is formed. This complex is subsequently bound by UvrC and the second UvrB is released. If no lesion is found, the DNA wraps around the other UvrB subunit that will check the other stand for damage. This is UvrABC system protein B from Cupriavidus pinatubonensis (strain JMP 134 / LMG 1197) (Cupriavidus necator (strain JMP 134)).